Consider the following 249-residue polypeptide: 2,3-bisphosphoglycerate-dependent phosphoglycerate mutase (249 aa).

Substrate contacts are provided by residues 11–18, 24–25, Arg63, 90–93, Lys101, 117–118, and 185–186; these read RHGNSEWN, TG, ERHY, RR, and GN. The active-site Tele-phosphohistidine intermediate is the His12. Glu90 serves as the catalytic Proton donor/acceptor.

It belongs to the phosphoglycerate mutase family. BPG-dependent PGAM subfamily.

The enzyme catalyses (2R)-2-phosphoglycerate = (2R)-3-phosphoglycerate. The protein operates within carbohydrate degradation; glycolysis; pyruvate from D-glyceraldehyde 3-phosphate: step 3/5. Functionally, catalyzes the interconversion of 2-phosphoglycerate and 3-phosphoglycerate. This is 2,3-bisphosphoglycerate-dependent phosphoglycerate mutase from Leifsonia xyli subsp. xyli (strain CTCB07).